The chain runs to 95 residues: RING finger protein Z (95 aa).

G2 carries N-myristoyl glycine; by host lipidation. The RING-type; atypical zinc-finger motif lies at 38 to 74; it reads CKSCWFANKGLLKCSNHYLCLKCLTLMLRRSDYCGIC. The short motif at 88–91 is the PTAP/PSAP motif element; that stretch reads PSAP.

This sequence belongs to the arenaviridae Z protein family. As to quaternary structure, interacts with protein NP; this interaction probably directs the encapsidated genome to budding sites. Interacts (via RING domain) with polymerase L; this interaction inhibits viral transcription and replication, Z partially blocks the product exit tunnel for the releasing nascent RNA product. Interacts with the glycoprotein complex; this interaction plays a role in virion budding. Interacts with host eIF4E; this interaction results in eIF4E reduced affinity for its substrate, the 5'-m7 G cap structure. Interacts (via late-budding domain) with host TSG101; this interaction is essential for budding and release of viral particles. Interacts with host RPLP0; this interaction may serve to load ribosome-like particles inside the virion. Interacts with host PML; this interaction induces PML bodies redistribution in the cytoplasm upon viral infection. In terms of processing, myristoylation is required for the role of RING finger protein Z in assembly and budding.

It localises to the virion. It is found in the host cytoplasm. Its subcellular location is the host perinuclear region. The protein resides in the host cell membrane. In terms of biological role, plays a crucial role in virion assembly and budding. Expressed late in the virus life cycle, it acts as an inhibitor of viral transcription and RNA synthesis by interacting with the viral polymerase L. Presumably recruits the NP encapsidated genome to cellular membranes at budding sites via direct interaction with NP. Plays critical roles in the final steps of viral release by interacting with host TSG101, a member of the vacuolar protein-sorting pathway and using other cellular host proteins involved in vesicle formation pathway. The budding of the virus progeny occurs after association of protein Z with the viral glycoprotein complex SSP-GP1-GP2 at the cell periphery, step that requires myristoylation of protein Z. Also selectively represses protein production by associating with host eIF4E. In cell-based minigenome assay, has an inhibitory effect on the ribonucleoprotein machinery (vRNP), which is responsible for the replication and transcription of the viral genome. This chain is RING finger protein Z, found in Neotoma (wood rats).